An 86-amino-acid chain; its full sequence is Large ribosomal subunit protein bL27 (86 aa).

The disordered stretch occupies residues 1–24 (MAHKKAGGSTRNGRDSESKRLGVK).

This sequence belongs to the bacterial ribosomal protein bL27 family.

The protein is Large ribosomal subunit protein bL27 of Alcanivorax borkumensis (strain ATCC 700651 / DSM 11573 / NCIMB 13689 / SK2).